A 579-amino-acid polypeptide reads, in one-letter code: Putative ABC transporter ATP-binding protein VPA1482 (579 aa).

ABC transporter domains lie at 3–244 (IEFS…GIRE) and 299–533 (LEVR…ANLT). ATP is bound by residues 37–44 (GPSGSGKS) and 332–339 (GKNGSGKS).

The protein belongs to the ABC transporter superfamily.

It is found in the cell inner membrane. Its function is as follows. Probably part of an ABC transporter complex. Responsible for energy coupling to the transport system. This chain is Putative ABC transporter ATP-binding protein VPA1482, found in Vibrio parahaemolyticus serotype O3:K6 (strain RIMD 2210633).